The primary structure comprises 310 residues: Pantoate--beta-alanine ligase (310 aa).

32-39 (MGYLHEGH) is a binding site for ATP. H39 functions as the Proton donor in the catalytic mechanism. Q63 is a binding site for (R)-pantoate. Residue Q63 participates in beta-alanine binding. 175-178 (GKKD) contacts ATP. A (R)-pantoate-binding site is contributed by Q181. 212-215 (MSSR) serves as a coordination point for ATP.

The protein belongs to the pantothenate synthetase family. As to quaternary structure, homodimer. As to expression, expressed in roots, cotyledons, leaves, stems, cauline leaves, stigma, sepals and petals.

Its subcellular location is the cytoplasm. It localises to the cytosol. The enzyme catalyses (R)-pantoate + beta-alanine + ATP = (R)-pantothenate + AMP + diphosphate + H(+). It participates in cofactor biosynthesis; (R)-pantothenate biosynthesis; (R)-pantothenate from (R)-pantoate and beta-alanine: step 1/1. Its activity is regulated as follows. Enzyme kinetics do not match Michaelis-Menten kinetics, suggesting allosteric behavior. Inhibited by high pantoate levels. Functionally, catalyzes the condensation of pantoate with beta-alanine to form pantothenate. Essential for panthotenate biosynthesis. The sequence is that of Pantoate--beta-alanine ligase from Arabidopsis thaliana (Mouse-ear cress).